Consider the following 124-residue polypeptide: Large ribosomal subunit protein bL17 (124 aa).

Belongs to the bacterial ribosomal protein bL17 family. As to quaternary structure, part of the 50S ribosomal subunit. Contacts protein L32.

The protein is Large ribosomal subunit protein bL17 of Persephonella marina (strain DSM 14350 / EX-H1).